Here is a 99-residue protein sequence, read N- to C-terminus: Bublin coiled-coil protein (99 aa).

Positions 34–71 form a coiled coil; that stretch reads LDQINSCLDDIEERNDALNGKLQELLESNRAARRDFRQ. A compositionally biased stretch (basic and acidic residues) spans 66–78; the sequence is RRDFRQQITDHAD. Residues 66-99 are disordered; the sequence is RRDFRQQITDHADLPPPANDDDEDEQSRDAQKKD.

This sequence belongs to the UPF0184 (EST00098) family.

The protein resides in the cell junction. It localises to the cytoplasm. The protein localises to the cytoskeleton. Essential for intermediate filament organization in intestinal cells, interacts with intermediate filament and regulates intestinal lumen morphology. This Danio rerio (Zebrafish) protein is Bublin coiled-coil protein (bbln).